The chain runs to 386 residues: Homogentisate solanesyltransferase, chloroplastic (386 aa).

The transit peptide at 1–69 (MELSISQSPR…STNYRKISIR (69 aa)) directs the protein to the chloroplast. 8 helical membrane-spanning segments follow: residues 130-150 (VLKA…IVGI), 181-201 (LVIF…GPFI), 204-220 (LYSL…VPPL), 225-245 (FPVA…NFGV), 259-279 (WSAP…VIAI), 306-326 (IAFL…SLAF), 335-355 (SLMI…TWVL), and 365-385 (ISGY…LFPF).

Belongs to the UbiA prenyltransferase family.

The protein localises to the plastid. Its subcellular location is the chloroplast membrane. The enzyme catalyses all-trans-nonaprenyl diphosphate + homogentisate + H(+) = 2-methyl-6-(all-trans-nonaprenyl)benzene-1,4-diol + CO2 + diphosphate. Inhibited by haloxydine (3,5-dichloro-2,6-difluoro-4-haloxypyridine). Functionally, involved in the synthesis of plastoquinone-9. Can use both homogentisic acid and 2,5-dihydroxyphenylacetic acid gamma-lactone as prenyl acceptors, and solanesyl diphosphate &gt; farnesyl diphosphate &gt; geranylgeranyl diphosphate &gt;&gt; phytyl diphosphate as prenyl donors. Do not catalyze the decardoxylation of homogentisate uncoupled from prenylation. In Arabidopsis thaliana (Mouse-ear cress), this protein is Homogentisate solanesyltransferase, chloroplastic (HST).